A 168-amino-acid polypeptide reads, in one-letter code: Disulfide bond formation protein B (168 aa).

Residues M1–I6 lie on the Cytoplasmic side of the membrane. A helical membrane pass occupies residues F7–Y23. At M24–F41 the chain is on the periplasmic side. Cysteines 33 and 36 form a disulfide. The chain crosses the membrane as a helical span at residues G42 to P58. The Cytoplasmic segment spans residues R59 to V65. Residues Y66–G82 traverse the membrane as a helical segment. Residues R83–G139 are Periplasmic-facing. A disulfide bridge links C98 with C125. The helical transmembrane segment at W140–R158 threads the bilayer. The Cytoplasmic portion of the chain corresponds to R159–S168.

It belongs to the DsbB family.

Its subcellular location is the cell inner membrane. In terms of biological role, required for disulfide bond formation in some periplasmic proteins. Acts by oxidizing the DsbA protein. The chain is Disulfide bond formation protein B from Marinobacter nauticus (strain ATCC 700491 / DSM 11845 / VT8) (Marinobacter aquaeolei).